Reading from the N-terminus, the 310-residue chain is Cytochrome P450 monooxygenase ppzG (310 aa).

A heme-binding site is contributed by Cys-288.

It belongs to the cytochrome P450 family. Heme serves as cofactor.

The protein operates within secondary metabolite biosynthesis. Its function is as follows. Cytochrome P450 monooxygenase; part of the gene cluster that mediates the biosynthesis of pyrrolopyrazines, secondary metabolites showing insecticidal activity. The role of ppzG within the pathway has still to be determined. The single multifunctional NRPS ppzA is sufficient to produce peramine via condensation of 1-pyrroline-5-carboxylate and arginine, N-methylation of the alpha-amino group of arginine and reduction of the thioester and the cyclization to form an iminium ion resulting in release from the peptide synthetase. Deprotonation of this intermediate and oxidation of the pyrroline ring would give rise to peramine. In Epichloe species that produce only peramine, the peramine synthetase gene is not localized in a gene cluster, in contrast to Metarhizium species that contain additional pyrrolopyrazine biosynthesis genes. The 2-oxoglutarate-Fe(II) type oxidoreductase ppzC hydroxylates peramine to yield the newly identified compound 8-hydroxyperamine whereas ppzD converts L-proline into trans-4-hydroxy-L-proline, a precursor of peramine biosynthesis. The sequence is that of Cytochrome P450 monooxygenase ppzG (ppzG) from Metarhizium majus (strain ARSEF 297).